The chain runs to 299 residues: Ankyrin repeat domain-containing protein 54 (299 aa).

The segment at 1–27 (MAATGGGAEDESRSGRSSSEGECAVAP) is disordered. Residue A2 is modified to N-acetylalanine. A Phosphoserine modification is found at S62. The Nuclear localization signal (NLS) motif lies at 98–116 (RRLGPTGKEVHALKRLRDS). ANK repeat units follow at residues 108 to 137 (HALKRLRDSANANDIETVQQLLEDGADPCA), 141 to 170 (KGRTALHFASCNGNDQIVQLLLDHGADPNQ), 174 to 203 (LGNTPLHLAACTNHVPVITTLLRGGARVDA), and 207 to 239 (AGRTPLHLAKSKLNILQEGHSQCLEAVRLEVKQ). The LYN-binding stretch occupies residues 140 to 240 (DKGRTALHFA…EAVRLEVKQI (101 aa)). A Nuclear export signal (NES) motif is present at residues 282–292 (LLASFTSLSLQ).

In terms of assembly, interacts (via ankyrin repeat region) with LYN (via SH3-domain) in an activation-independent status of LYN. Forms a multiprotein complex with LYN and HCLS1. Interacts with TSN2, VAV1, DBNL and LASP1.

It is found in the nucleus. The protein resides in the cytoplasm. It localises to the midbody. Its function is as follows. Plays an important role in regulating intracellular signaling events associated with erythroid terminal differentiation. The protein is Ankyrin repeat domain-containing protein 54 (Ankrd54) of Rattus norvegicus (Rat).